The chain runs to 314 residues: Ribosomal RNA small subunit methyltransferase H (314 aa).

Residues 32–34 (GGH), Asp52, Phe79, Asp100, and Gln107 each bind S-adenosyl-L-methionine.

This sequence belongs to the methyltransferase superfamily. RsmH family.

The protein resides in the cytoplasm. The catalysed reaction is cytidine(1402) in 16S rRNA + S-adenosyl-L-methionine = N(4)-methylcytidine(1402) in 16S rRNA + S-adenosyl-L-homocysteine + H(+). Its function is as follows. Specifically methylates the N4 position of cytidine in position 1402 (C1402) of 16S rRNA. This is Ribosomal RNA small subunit methyltransferase H from Shouchella clausii (strain KSM-K16) (Alkalihalobacillus clausii).